Reading from the N-terminus, the 440-residue chain is Rhamnogalacturonase A (440 aa).

Positions 1 to 18 (MRALFLLALGSIPALVSG) are cleaved as a signal peptide. C39 and C65 are disulfide-bonded. The N-linked (GlcNAc...) asparagine glycan is linked to N50. D215 functions as the Proton donor in the catalytic mechanism. An intrachain disulfide couples C217 to C234. The active site involves H290. N317 carries N-linked (GlcNAc...) asparagine glycosylation. Disulfide bonds link C340-C346 and C368-C377. A glycan (O-linked (Man) threonine) is linked at T385. S386 carries O-linked (Man) serine glycosylation. 3 O-linked (Man) threonine glycosylation sites follow: T388, T389, and T390. S391 carries O-linked (Man) serine glycosylation. O-linked (Man) threonine glycosylation is found at T392 and T394. Residues S398 and S401 are each glycosylated (O-linked (Man) serine). 3 O-linked (Man) threonine glycosylation sites follow: T403, T404, and T416. A glycan (O-linked (Man) serine) is linked at S418. T423 and T426 each carry an O-linked (Man) threonine glycan. 2 O-linked (Man) serine glycosylation sites follow: S427 and S436.

It belongs to the glycosyl hydrolase 28 family. The N-terminus is blocked. In terms of processing, N-glycosylated and may also be O-glycosylated.

The protein localises to the secreted. The enzyme catalyses Endohydrolysis of alpha-D-GalA-(1-&gt;2)-alpha-L-Rha glycosidic bond in the rhamnogalacturonan I backbone with initial inversion of anomeric configuration releasing oligosaccharides with beta-D-GalA at the reducing end.. In terms of biological role, pectinolytic enzymes consist of four classes of enzymes: pectine lyase, polygalacturonase, pectin methylesterase and rhamnogalacturonase. Has a positive effect in the apple hot-mash liquefaction process. Hydrolyzes alpha-D-galacturonopyranosyl-(1,2)-alpha-L-rhamnopyranosyl linkages in the backbone of the hairy regions of pectins. This chain is Rhamnogalacturonase A (rhgA), found in Aspergillus aculeatus.